The chain runs to 162 residues: Large ribosomal subunit protein uL10 (162 aa).

This sequence belongs to the universal ribosomal protein uL10 family. Part of the ribosomal stalk of the 50S ribosomal subunit. The N-terminus interacts with L11 and the large rRNA to form the base of the stalk. The C-terminus forms an elongated spine to which L12 dimers bind in a sequential fashion forming a multimeric L10(L12)X complex.

In terms of biological role, forms part of the ribosomal stalk, playing a central role in the interaction of the ribosome with GTP-bound translation factors. This is Large ribosomal subunit protein uL10 from Borrelia recurrentis (strain A1).